The sequence spans 480 residues: Protein nucleotidyltransferase YdiU (480 aa).

ATP is bound by residues G86, G88, R89, K109, D121, G122, R172, and R179. D248 acts as the Proton acceptor in catalysis. 2 residues coordinate Mg(2+): N249 and D258. D258 is a binding site for ATP.

Belongs to the SELO family. Mg(2+) serves as cofactor. Requires Mn(2+) as cofactor.

It carries out the reaction L-seryl-[protein] + ATP = 3-O-(5'-adenylyl)-L-seryl-[protein] + diphosphate. The enzyme catalyses L-threonyl-[protein] + ATP = 3-O-(5'-adenylyl)-L-threonyl-[protein] + diphosphate. The catalysed reaction is L-tyrosyl-[protein] + ATP = O-(5'-adenylyl)-L-tyrosyl-[protein] + diphosphate. It catalyses the reaction L-histidyl-[protein] + UTP = N(tele)-(5'-uridylyl)-L-histidyl-[protein] + diphosphate. It carries out the reaction L-seryl-[protein] + UTP = O-(5'-uridylyl)-L-seryl-[protein] + diphosphate. The enzyme catalyses L-tyrosyl-[protein] + UTP = O-(5'-uridylyl)-L-tyrosyl-[protein] + diphosphate. Its function is as follows. Nucleotidyltransferase involved in the post-translational modification of proteins. It can catalyze the addition of adenosine monophosphate (AMP) or uridine monophosphate (UMP) to a protein, resulting in modifications known as AMPylation and UMPylation. This chain is Protein nucleotidyltransferase YdiU, found in Salmonella paratyphi B (strain ATCC BAA-1250 / SPB7).